The sequence spans 315 residues: Protein TIFY 4B (315 aa).

The interval 113-145 is disordered; that stretch reads CHRRDSPRSAEFSGSSGQFVADKDSHKTVSVSP. The region spanning 151–186 is the Tify domain; it reads TNAVVGQMTIFYSGKVNVYDGVPPEKARSIMHFAAN. Positions 233 to 260 match the Jas motif; that stretch reads QANRKVSLQRYLEKRKDRRFSKTKKAPG. The Nuclear localization signal signature appears at 235 to 242; that stretch reads NRKVSLQR. The span at 248 to 257 shows a compositional bias: basic residues; sequence KDRRFSKTKK. The tract at residues 248-315 is disordered; that stretch reads KDRRFSKTKK…LNSDLNSEDN (68 aa). Residues 293-315 show a composition bias toward polar residues; it reads PENQTKSPNISVDLNSDLNSEDN.

It belongs to the TIFY/JAZ family. As to quaternary structure, interacts with AFPH2/NINJA.

Its subcellular location is the nucleus. In terms of biological role, regulates the arrest of dispersed meristematic cells during lamina development. The protein is Protein TIFY 4B (TIFY4B) of Arabidopsis thaliana (Mouse-ear cress).